Consider the following 282-residue polypeptide: Pantothenate synthetase (282 aa).

30–37 (MGYLHEGH) contacts ATP. His37 functions as the Proton donor in the catalytic mechanism. Gln61 serves as a coordination point for (R)-pantoate. Residue Gln61 coordinates beta-alanine. 147–150 (GMKD) contributes to the ATP binding site. Gln153 is a (R)-pantoate binding site. Residues Val176 and 184–187 (KSSR) each bind ATP.

Belongs to the pantothenate synthetase family. Homodimer.

It localises to the cytoplasm. The catalysed reaction is (R)-pantoate + beta-alanine + ATP = (R)-pantothenate + AMP + diphosphate + H(+). Its pathway is cofactor biosynthesis; (R)-pantothenate biosynthesis; (R)-pantothenate from (R)-pantoate and beta-alanine: step 1/1. Functionally, catalyzes the condensation of pantoate with beta-alanine in an ATP-dependent reaction via a pantoyl-adenylate intermediate. In Bacillus cereus (strain AH187), this protein is Pantothenate synthetase.